A 311-amino-acid chain; its full sequence is Glycine-betaine-binding protein (311 aa).

The first 23 residues, 1–23, serve as a signal peptide directing secretion; that stretch reads MNRLIRSLCLACAGLFAAGLAQA.

Belongs to the OsmX family.

The protein localises to the periplasm. In terms of biological role, binds glycine-betaine. The sequence is that of Glycine-betaine-binding protein from Pseudomonas aeruginosa (strain ATCC 15692 / DSM 22644 / CIP 104116 / JCM 14847 / LMG 12228 / 1C / PRS 101 / PAO1).